Here is a 162-residue protein sequence, read N- to C-terminus: NADH-quinone oxidoreductase subunit I (162 aa).

2 4Fe-4S ferredoxin-type domains span residues 53 to 83 and 93 to 122; these read LRRY…IEAE and TRYD…EGPN. Residues Cys-63, Cys-66, Cys-69, Cys-73, Cys-102, Cys-105, Cys-108, and Cys-112 each contribute to the [4Fe-4S] cluster site.

This sequence belongs to the complex I 23 kDa subunit family. In terms of assembly, NDH-1 is composed of 14 different subunits. Subunits NuoA, H, J, K, L, M, N constitute the membrane sector of the complex. It depends on [4Fe-4S] cluster as a cofactor.

It is found in the cell inner membrane. It catalyses the reaction a quinone + NADH + 5 H(+)(in) = a quinol + NAD(+) + 4 H(+)(out). Its function is as follows. NDH-1 shuttles electrons from NADH, via FMN and iron-sulfur (Fe-S) centers, to quinones in the respiratory chain. The immediate electron acceptor for the enzyme in this species is believed to be ubiquinone. Couples the redox reaction to proton translocation (for every two electrons transferred, four hydrogen ions are translocated across the cytoplasmic membrane), and thus conserves the redox energy in a proton gradient. This chain is NADH-quinone oxidoreductase subunit I, found in Sphingopyxis alaskensis (strain DSM 13593 / LMG 18877 / RB2256) (Sphingomonas alaskensis).